The primary structure comprises 322 residues: Probable 5-dehydro-4-deoxyglucarate dehydratase 2 (322 aa).

The protein belongs to the DapA family.

It carries out the reaction 5-dehydro-4-deoxy-D-glucarate + H(+) = 2,5-dioxopentanoate + CO2 + H2O. It participates in carbohydrate acid metabolism; D-glucarate degradation; 2,5-dioxopentanoate from D-glucarate: step 2/2. This is Probable 5-dehydro-4-deoxyglucarate dehydratase 2 from Streptomyces coelicolor (strain ATCC BAA-471 / A3(2) / M145).